The following is a 400-amino-acid chain: Acetate kinase (400 aa).

Asn-10 serves as a coordination point for Mg(2+). Lys-17 provides a ligand contact to ATP. Substrate is bound at residue Arg-91. The Proton donor/acceptor role is filled by Asp-150. ATP is bound by residues 210–214 (HLGNG), 285–287 (DCR), and 333–337 (GIGEN). Glu-387 lines the Mg(2+) pocket.

It belongs to the acetokinase family. Homodimer. The cofactor is Mg(2+). Requires Mn(2+) as cofactor.

Its subcellular location is the cytoplasm. The enzyme catalyses acetate + ATP = acetyl phosphate + ADP. It functions in the pathway metabolic intermediate biosynthesis; acetyl-CoA biosynthesis; acetyl-CoA from acetate: step 1/2. Catalyzes the formation of acetyl phosphate from acetate and ATP. Can also catalyze the reverse reaction. The chain is Acetate kinase from Pectobacterium carotovorum subsp. carotovorum (strain PC1).